A 777-amino-acid chain; its full sequence is Zygote defective protein 12 (777 aa).

Composition is skewed to basic and acidic residues over residues 1-10 (MLDLTNKESE) and 18-36 (KYED…PFKE). The segment at 1–36 (MLDLTNKESESSDNGNSKYEDSIDGREVGTSKPFKE) is disordered. Positions 1-234 (MLDLTNKESE…ESSGKLNGNG (234 aa)) are interaction with dli-1. One can recognise a Calponin-homology (CH) domain in the interval 44-169 (QADLADMAVW…VTLAHIGKNA (126 aa)). Disordered stretches follow at residues 217 to 242 (QSEL…RSNA) and 273 to 292 (SFET…DISI). Residues 218 to 235 (SELNSLSESSGKLNGNGS) are compositionally biased toward low complexity. Coiled coils occupy residues 236–399 (SERR…HHVK) and 425–688 (NTEL…QENR). The span at 273–288 (SFETAQHDMSSNSESG) shows a compositional bias: polar residues. A helical transmembrane segment spans residues 747 to 767 (AMASILVLGFLVFIAWMFINI). Residues 749 to 777 (ASILVLGFLVFIAWMFININSALNAPPNA) are interaction with unc-84.

Belongs to the hook family. Homodimer. Interacts with the dynein subunit dli-1 via its N-terminus. May interact with microtubules. Interacts with sut-2. Interacts (via C-terminus) with unc-84 (via C-terminus); the interaction is direct. As to expression, expressed in the syncytial gonad, oocytes, and in all cells during the development of the early embryo.

The protein localises to the nucleus membrane. Its subcellular location is the cytoplasm. It localises to the cytoskeleton. It is found in the microtubule organizing center. The protein resides in the centrosome. Functionally, cytoskeletal linker protein, which is essential for attachment of the centrosome to the nucleus. Required for dynein localization to the nuclear envelope. Forms a LINC (LInker of Nucleoskeleton and Cytoskeleton) complex together with unc-84, that may be involved in DNA damage repair. This is Zygote defective protein 12 from Caenorhabditis elegans.